We begin with the raw amino-acid sequence, 199 residues long: Ribonuclease P protein component 3 (199 aa).

Belongs to the eukaryotic/archaeal RNase P protein component 3 family. As to quaternary structure, consists of a catalytic RNA component and at least 4-5 protein subunits.

It is found in the cytoplasm. It carries out the reaction Endonucleolytic cleavage of RNA, removing 5'-extranucleotides from tRNA precursor.. In terms of biological role, part of ribonuclease P, a protein complex that generates mature tRNA molecules by cleaving their 5'-ends. The chain is Ribonuclease P protein component 3 from Archaeoglobus fulgidus (strain ATCC 49558 / DSM 4304 / JCM 9628 / NBRC 100126 / VC-16).